Here is a 495-residue protein sequence, read N- to C-terminus: Surface E' protein (495 aa).

A helical membrane pass occupies residues 224 to 235 (GTLIGLVALIGV).

It is found in the cell membrane. This Coxiella burnetii protein is Surface E' protein (cbbE').